Reading from the N-terminus, the 155-residue chain is Large ribosomal subunit protein uL22 (155 aa).

Belongs to the universal ribosomal protein uL22 family. In terms of assembly, part of the 50S ribosomal subunit. Contacts the macrolide antibiotic tylosin in the polypeptide exit tunnel.

Its function is as follows. This protein binds specifically to 23S rRNA. It makes multiple contacts with different domains of the 23S rRNA in the assembled 50S subunit and ribosome. In terms of biological role, contacts all 6 domains of the 23S rRNA, helping stabilize their relative orientation. An extended beta-hairpin in the C-terminus forms part of the polypeptide exit tunnel, in which it helps forms a bend with protein L4, while most of the rest of the protein is located at the polypeptide exit tunnel on the outside of the subunit. The protein is Large ribosomal subunit protein uL22 of Haloarcula marismortui (strain ATCC 43049 / DSM 3752 / JCM 8966 / VKM B-1809) (Halobacterium marismortui).